The chain runs to 64 residues: uncharacterized protein (64 aa).

A disordered region spans residues 35 to 64 (TIRKPPIEHAAGPLGSTSRAGHRSYGGVAS).

This is an uncharacterized protein from Mycobacterium tuberculosis (strain ATCC 25618 / H37Rv).